The chain runs to 703 residues: MARKTPIARYRNIGICAHVDAGKTTTTERVLFYTGLSHKIGEVHDGAATMDWMEQEQERGITITSAATTCFWAGMEQQFDQHRINIIDTPGHVDFTIEVERSLRVLDGAVVVLCGSSGVQPQTETVWRQANKYEVPRMVFVNKMDRAGANFLRVVEQLKDRLGATAVPLQMTIGSEDEFKGIVDLIEMKAILWNEADQGMTFDRADIPADMLEECEELREQMVEAAAEANEELMEKYLEEGELTNDEIKKGIRLRTLANEIVPVLGGSAFKNKGVQAMLDAVIEYLPAPTEVKAIQGTLEDGETVAERHADDTEPFSALAFKIATDPFVGTLTFFRVYSGKLESGTALLNSVKGKKERIGRMVQMHANSREEIKEVLAGDIAAAIGLKDTTTGDTLCAENSFIVLERMEFPEPVISVAVEPKSKADQEKMGIALGKLAQEDPSFRVRTDEETGQTIISGMGELHLDILVDRMRREFKVEANIGKPQVAYRERITKTSEIEGKFVRQSGGRGQFGHVWIRFEPAEDGDAEGLEFVNEIVGGVVPKEYIPAVEKGISEQMQNGVVAGYPLLGLKATIYDGSYHDVDSNEMAFKIAASMATKKLAQHGGAVLLEPMMKVEVVTPEENMGDVVGDLNRRRGLIQGMDENPSGKVVNAEVPLAEMFGYATALRSATQGRATFTMEFERYAEAPSNIAEEIIAKNKTGE.

A tr-type G domain is found at 8–290 (ARYRNIGICA…AVIEYLPAPT (283 aa)). GTP-binding positions include 17 to 24 (AHVDAGKT), 88 to 92 (DTPGH), and 142 to 145 (NKMD).

This sequence belongs to the TRAFAC class translation factor GTPase superfamily. Classic translation factor GTPase family. EF-G/EF-2 subfamily.

It localises to the cytoplasm. In terms of biological role, catalyzes the GTP-dependent ribosomal translocation step during translation elongation. During this step, the ribosome changes from the pre-translocational (PRE) to the post-translocational (POST) state as the newly formed A-site-bound peptidyl-tRNA and P-site-bound deacylated tRNA move to the P and E sites, respectively. Catalyzes the coordinated movement of the two tRNA molecules, the mRNA and conformational changes in the ribosome. The chain is Elongation factor G from Teredinibacter turnerae (strain ATCC 39867 / T7901).